The following is an 809-amino-acid chain: Lon protease (809 aa).

Residues 8–203 (LPVVALRNMA…RLCLILADEI (196 aa)) enclose the Lon N-terminal domain. 354 to 361 (GPPGTGKT) contacts ATP. In terms of domain architecture, Lon proteolytic spans 629 to 809 (KDEVGIVCGL…MDEVLKHALV (181 aa)). Residues serine 716 and lysine 759 contribute to the active site.

This sequence belongs to the peptidase S16 family. Homohexamer. Organized in a ring with a central cavity.

It localises to the cytoplasm. It catalyses the reaction Hydrolysis of proteins in presence of ATP.. Its function is as follows. ATP-dependent serine protease that mediates the selective degradation of mutant and abnormal proteins as well as certain short-lived regulatory proteins. Required for cellular homeostasis and for survival from DNA damage and developmental changes induced by stress. Degrades polypeptides processively to yield small peptide fragments that are 5 to 10 amino acids long. Binds to DNA in a double-stranded, site-specific manner. The protein is Lon protease of Lachnoclostridium phytofermentans (strain ATCC 700394 / DSM 18823 / ISDg) (Clostridium phytofermentans).